We begin with the raw amino-acid sequence, 392 residues long: Norsolorinic acid reductase B (392 aa).

NADP(+) is bound at residue D75. The active-site Proton donor is the Y80. Residues 184–185, Q210, 239–249, and 311–319 each bind NADP(+); these read SD, GTLGQGSFQTE, and RKLEHIQGN. Residues 242 to 263 are disordered; the sequence is GQGSFQTEEGRKQREKDNPGRK. Positions 249–261 are enriched in basic and acidic residues; the sequence is EEGRKQREKDNPG.

This sequence belongs to the aldo/keto reductase family. Aldo/keto reductase 2 subfamily.

Its pathway is mycotoxin biosynthesis. Its function is as follows. Norsolorinic acid reductase; part of the fragmented gene cluster that mediates the biosynthesis of dothistromin (DOTH), a polyketide toxin very similar in structure to the aflatoxin precursor, versicolorin B. The first step of the pathway is the conversion of acetate to norsolorinic acid (NOR) and requires the fatty acid synthase subunits hexA and hexB, as well as the polyketide synthase pksA. PksA combines a hexanoyl starter unit and 7 malonyl-CoA extender units to synthesize the precursor NOR. The hexanoyl starter unit is provided to the acyl-carrier protein (ACP) domain by the fungal fatty acid synthase hexA/hexB. The second step is the conversion of NOR to averantin (AVN) and requires the norsolorinic acid ketoreductase nor1, which catalyzes the dehydration of norsolorinic acid to form (1'S)-averantin. The cytochrome P450 monooxygenase avnA then catalyzes the hydroxylation of AVN to 5'hydroxyaverantin (HAVN). The next step is performed by adhA that transforms HAVN to averufin (AVF). Averufin might then be converted to hydroxyversicolorone by cypX and avfA. Hydroxyversicolorone is further converted versiconal hemiacetal acetate (VHA) by moxY. VHA is then the substrate for the versiconal hemiacetal acetate esterase est1 to yield versiconal (VAL). Versicolorin B synthase vbsA then converts VAL to versicolorin B (VERB) by closing the bisfuran ring. Then, the activity of the versicolorin B desaturase verB leads to versicolorin A (VERA). DotB, a predicted chloroperoxidase, may perform epoxidation of the A-ring of VERA. Alternatively, a cytochrome P450, such as cypX or avnA could catalyze this step. It is also possible that another, uncharacterized, cytochrome P450 enzyme is responsible for this step. Opening of the epoxide could potentially be achieved by the epoxide hydrolase epoA. However, epoA seems not to be required for DOTH biosynthesis, but other epoxide hydrolases may have the ability to complement this hydrolysis. Alternatively, opening of the epoxide ring could be achieved non-enzymatically. The next step is the deoxygenation of ring A to yield the 5,8-dihydroxyanthraquinone which is most likely catalyzed by the NADPH dehydrogenase encoded by ver1. The last stages of DOTH biosynthesis are proposed to involve hydroxylation of the bisfuran. OrdB and norB might have oxidative roles here. An alternative possibility is that cytochrome P450 monoogenases such as avnA and cypX might perform these steps in addition to previously proposed steps. This Dothistroma septosporum (strain NZE10 / CBS 128990) (Red band needle blight fungus) protein is Norsolorinic acid reductase B.